Reading from the N-terminus, the 129-residue chain is Small ribosomal subunit protein uS11 (129 aa).

Belongs to the universal ribosomal protein uS11 family. As to quaternary structure, part of the 30S ribosomal subunit. Interacts with proteins S7 and S18. Binds to IF-3.

Functionally, located on the platform of the 30S subunit, it bridges several disparate RNA helices of the 16S rRNA. Forms part of the Shine-Dalgarno cleft in the 70S ribosome. The polypeptide is Small ribosomal subunit protein uS11 (Erythrobacter litoralis (strain HTCC2594)).